The primary structure comprises 137 residues: MLNEFRTFINRGNVLDLAVGVIIGAAFTAIINSLVNDIINPLLGLLVGGRTDMSNYFLPLAGQTATTLAEARAAGPVLAYGSFLNAVINFLLVAFVIFLIVRTANRFNPKPAEPPALPQPTPSERLLAEIRDLLAQR.

Helical transmembrane passes span 14 to 34 (VLDL…INSL) and 81 to 101 (GSFL…FLIV).

It belongs to the MscL family. In terms of assembly, homopentamer.

It localises to the cell membrane. Channel that opens in response to stretch forces in the membrane lipid bilayer. May participate in the regulation of osmotic pressure changes within the cell. In Chloroflexus aggregans (strain MD-66 / DSM 9485), this protein is Large-conductance mechanosensitive channel.